The following is a 49-amino-acid chain: Glutathione peroxidase (49 aa).

The protein belongs to the glutathione peroxidase family.

It catalyses the reaction 2 glutathione + H2O2 = glutathione disulfide + 2 H2O. Inhibited by Cu(2+), SDS and DTT. Activity is slightly increased by Fe(2+), Mn(2+), triton X-100 and EDTA. Its function is as follows. Glutathione peroxidase which may protect the cell from oxidative damage. The polypeptide is Glutathione peroxidase (Lactiplantibacillus plantarum (Lactobacillus plantarum)).